Reading from the N-terminus, the 371-residue chain is Peptide chain release factor 2 (371 aa).

Q253 carries the post-translational modification N5-methylglutamine.

It belongs to the prokaryotic/mitochondrial release factor family. Post-translationally, methylated by PrmC. Methylation increases the termination efficiency of RF2.

Its subcellular location is the cytoplasm. Its function is as follows. Peptide chain release factor 2 directs the termination of translation in response to the peptide chain termination codons UGA and UAA. The chain is Peptide chain release factor 2 from Mycobacterium sp. (strain KMS).